Reading from the N-terminus, the 693-residue chain is Elongation factor G (693 aa).

In terms of domain architecture, tr-type G spans 8–282; the sequence is EKTRNIGIMA…AVIDYLPSPL (275 aa). Residues 17 to 24, 81 to 85, and 135 to 138 each bind GTP; these read AHIDAGKT, DTPGH, and NKMD.

The protein belongs to the TRAFAC class translation factor GTPase superfamily. Classic translation factor GTPase family. EF-G/EF-2 subfamily.

Its subcellular location is the cytoplasm. In terms of biological role, catalyzes the GTP-dependent ribosomal translocation step during translation elongation. During this step, the ribosome changes from the pre-translocational (PRE) to the post-translocational (POST) state as the newly formed A-site-bound peptidyl-tRNA and P-site-bound deacylated tRNA move to the P and E sites, respectively. Catalyzes the coordinated movement of the two tRNA molecules, the mRNA and conformational changes in the ribosome. The chain is Elongation factor G from Staphylococcus aureus (strain Mu3 / ATCC 700698).